A 271-amino-acid polypeptide reads, in one-letter code: Co-chaperone protein DjlA (271 aa).

Residues 1–6 (MQYWGK) are Periplasmic-facing. A helical membrane pass occupies residues 7-31 (IIGVAVALLMGGGFWGVVLGLLIGH). At 32 to 271 (MFDKARSRKM…ELIKQQKGFK (240 aa)) the chain is on the cytoplasmic side. The J domain maps to 205-271 (DACNVLGVKP…ELIKQQKGFK (67 aa)).

In terms of assembly, homodimer.

It is found in the cell inner membrane. Its function is as follows. Regulatory DnaK co-chaperone. Direct interaction between DnaK and DjlA is needed for the induction of the wcaABCDE operon, involved in the synthesis of a colanic acid polysaccharide capsule, possibly through activation of the RcsB/RcsC phosphotransfer signaling pathway. The colanic acid capsule may help the bacterium survive conditions outside the host. The polypeptide is Co-chaperone protein DjlA (Escherichia coli O157:H7).